The sequence spans 104 residues: UPF0235 protein RBE_0633 (104 aa).

This sequence belongs to the UPF0235 family.

This Rickettsia bellii (strain RML369-C) protein is UPF0235 protein RBE_0633.